Reading from the N-terminus, the 390-residue chain is MNKTNPTIALVAGEVSGDILGAGLIRQLKAHYPNARFIGIAGTRMLAEGCKTLVDMEELSVMGLAEILKHLPRLLKIRKNVIQTMLQEKPDVYIGIDAPDFNLDVELKLKANGIKTIHYVSPSVWAWRQNRIHKIAKATHQVLAFLPFEKAFYDKFNVPCRFIGHTMADAIPLKPNRAEACQMLQIDPAQRYLAILVGSRGSEVEFLAEPFLKTALLLKEQFPDLQFLVPLVNEKRRIQFEAIKAKIAPNLDLHLIDGNARQAMIAADATLLASGTAALEAMLCKSPMVVGYRMKPLTYFLAKRLVKTDYISLPNLLANEMLVPEMIQEECTPELLAEKLSAYLSDDESAVKNRHILIQHFTDLHQKIQCNADKQAAQAVIDLLEGTENV.

It belongs to the LpxB family.

The catalysed reaction is a lipid X + a UDP-2-N,3-O-bis[(3R)-3-hydroxyacyl]-alpha-D-glucosamine = a lipid A disaccharide + UDP + H(+). It functions in the pathway bacterial outer membrane biogenesis; LPS lipid A biosynthesis. Condensation of UDP-2,3-diacylglucosamine and 2,3-diacylglucosamine-1-phosphate to form lipid A disaccharide, a precursor of lipid A, a phosphorylated glycolipid that anchors the lipopolysaccharide to the outer membrane of the cell. This chain is Lipid-A-disaccharide synthase, found in Haemophilus influenzae (strain 86-028NP).